We begin with the raw amino-acid sequence, 267 residues long: Methylglyoxal reductase DkgB (267 aa).

Residue Y39 is the Proton donor of the active site. Residue H97 participates in substrate binding. NADP(+) is bound at residue 179–231 (MTLAYGKALKDEVIARIAAKHNATPAQVILAWAMGEGYSVIPSSTRRENLASS).

It belongs to the aldo/keto reductase family. In terms of assembly, monomer.

The protein resides in the cytoplasm. It carries out the reaction hydroxyacetone + NADP(+) = methylglyoxal + NADPH + H(+). Aldo-keto reductase that significantly contributes to cellular methylglyoxal detoxification by catalyzing the NADPH-dependent conversion of methylglyoxal to acetol. This is Methylglyoxal reductase DkgB from Salmonella typhimurium (strain LT2 / SGSC1412 / ATCC 700720).